Reading from the N-terminus, the 231-residue chain is Ribose-5-phosphate isomerase A (231 aa).

Residues 32–35 (TGST), 85–88 (DGAD), and 98–101 (KGGG) each bind substrate. Glu-107 serves as the catalytic Proton acceptor. Lys-125 contributes to the substrate binding site.

This sequence belongs to the ribose 5-phosphate isomerase family. As to quaternary structure, homodimer.

The enzyme catalyses aldehydo-D-ribose 5-phosphate = D-ribulose 5-phosphate. Its pathway is carbohydrate degradation; pentose phosphate pathway; D-ribose 5-phosphate from D-ribulose 5-phosphate (non-oxidative stage): step 1/1. Its function is as follows. Catalyzes the reversible conversion of ribose-5-phosphate to ribulose 5-phosphate. This Paraburkholderia xenovorans (strain LB400) protein is Ribose-5-phosphate isomerase A.